The chain runs to 765 residues: Palmitoyltransferase ZDHHC8 (765 aa).

The Cytoplasmic segment spans residues 1–13 (MPRSPGTRLKPAK). A helical membrane pass occupies residues 14-34 (YIPVATAAALLVGSSTLFFVF). Topologically, residues 35–52 (TCPWLTRAVSPAVPVYNG) are lumenal. Residues 53-73 (IIFLFVLANFSMATFMDPGVF) traverse the membrane as a helical segment. Topologically, residues 74–148 (PRADEDEDKE…NCIGRRNYRY (75 aa)) are cytoplasmic. The DHHC domain maps to 104–154 (KWCATCHFYRPPRCSHCSVCDNCVEDFDHHCPWVNNCIGRRNYRYFFLFLL). Cysteine 134 serves as the catalytic S-palmitoyl cysteine intermediate. The chain crosses the membrane as a helical span at residues 149 to 169 (FFLFLLSLSAHMVGVVAFGLV). At 170 to 190 (YVLNHAEGLGAAHTTITMAVM) the chain is on the lumenal side. A helical transmembrane segment spans residues 191-211 (CVAGLFFIPVIGLTGFHVVLV). Over 212-765 (TRGRTTNEHV…VGGTTYEISV (554 aa)) the chain is Cytoplasmic. Residues 290–386 (LKAGLGRSKS…PGPDSLTLGE (97 aa)) form a disordered region. Residues 301 to 311 (GSLDRLDEKPL) are compositionally biased toward basic and acidic residues. Residues 333 to 348 (PRPSSAESALSAQRTS) are compositionally biased toward polar residues. Serine 337 carries the phosphoserine modification. Residue arginine 441 is modified to Omega-N-methylarginine. A disordered region spans residues 447-542 (ALQPLRSEGG…PREPSPVRYD (96 aa)). Residues serine 606 and serine 627 each carry the phosphoserine modification. The interval 630–747 (SLSSAVSRAP…PGPSASPARH (118 aa)) is disordered. A compositionally biased stretch (polar residues) spans 639–655 (PRTSSSSLQADLANNNA). The segment covering 671-680 (QGPPSPPSTP) has biased composition (pro residues). Serine 675, serine 682, serine 725, and serine 743 each carry phosphoserine.

This sequence belongs to the DHHC palmitoyltransferase family. ERF2/ZDHHC9 subfamily.

Its subcellular location is the golgi apparatus membrane. It is found in the mitochondrion membrane. It carries out the reaction L-cysteinyl-[protein] + hexadecanoyl-CoA = S-hexadecanoyl-L-cysteinyl-[protein] + CoA. Functionally, palmitoyltransferase that catalyzes the addition of palmitate onto various protein substrates and therefore functions in several unrelated biological processes. Through the palmitoylation of ABCA1 regulates the localization of the transporter to the plasma membrane and thereby regulates its function in cholesterol and phospholipid efflux. Could also pamitoylate the D(2) dopamine receptor DRD2 and regulate its stability and localization to the plasma membrane. Could also play a role in glutamatergic transmission. The chain is Palmitoyltransferase ZDHHC8 from Canis lupus familiaris (Dog).